The following is a 555-amino-acid chain: Adenine deaminase (555 aa).

The protein belongs to the metallo-dependent hydrolases superfamily. Adenine deaminase family. Mn(2+) is required as a cofactor.

It carries out the reaction adenine + H2O + H(+) = hypoxanthine + NH4(+). This Methanosarcina mazei (strain ATCC BAA-159 / DSM 3647 / Goe1 / Go1 / JCM 11833 / OCM 88) (Methanosarcina frisia) protein is Adenine deaminase.